A 143-amino-acid polypeptide reads, in one-letter code: Large ribosomal subunit protein uL15 (143 aa).

The disordered stretch occupies residues 1–59 (MELNGIKPADGAKHYKRRVGRGIGSGIGKTAGRGHKGQKSRAGGYHKVGFEGGQMPMQR). Gly residues predominate over residues 21 to 31 (RGIGSGIGKTA).

Belongs to the universal ribosomal protein uL15 family. Part of the 50S ribosomal subunit.

Binds to the 23S rRNA. The protein is Large ribosomal subunit protein uL15 of Albidiferax ferrireducens (strain ATCC BAA-621 / DSM 15236 / T118) (Rhodoferax ferrireducens).